Reading from the N-terminus, the 279-residue chain is Alcohol dehydrogenase-related 31 kDa protein (279 aa).

11-34 serves as a coordination point for NAD(+); sequence YVADCGGIALETSKVLMTKNIAKL. Ser139 contributes to the substrate binding site. Tyr152 functions as the Proton acceptor in the catalytic mechanism.

This sequence belongs to the short-chain dehydrogenases/reductases (SDR) family.

The polypeptide is Alcohol dehydrogenase-related 31 kDa protein (Adhr) (Drosophila subobscura (Fruit fly)).